The sequence spans 30 residues: Serum amyloid P-component (30 aa).

A Pentraxin (PTX) domain is found at 1–30 (APQDLSGKMFIFPQETSTANVXLTARSQDF).

Belongs to the pentraxin family. Homopentamer. Discoid arrangement of 5 covalently bound subunits. Ca(2+) serves as cofactor.

Its subcellular location is the secreted. This is Serum amyloid P-component from Anarhichas lupus (Atlantic wolffish).